The primary structure comprises 195 residues: MLIAFEGIDGSGKTTQAKKLYEYLKQKGYFVSLYREPGGTKVGEVLREILLTEELDERTELLLFEASRSKLIEEKIIPDLKRDKVVILDRFVLSTIAYQGYGKGLDVEFIKNLNEFATRGVKPDITLLLDIPVDIALRRLKEKNRFENKEFLEKVRKGFLELAKEEENVVVIDASGEEEEVFKEILRALSGVLRV.

Residue 7–14 (GIDGSGKT) participates in ATP binding.

This sequence belongs to the thymidylate kinase family.

The enzyme catalyses dTMP + ATP = dTDP + ADP. Functionally, phosphorylation of dTMP to form dTDP in both de novo and salvage pathways of dTTP synthesis. This is Thymidylate kinase (tmk) from Aquifex aeolicus (strain VF5).